We begin with the raw amino-acid sequence, 239 residues long: Uridylate kinase (239 aa).

Lys-10 to Gly-13 serves as a coordination point for ATP. The tract at residues Gly-18–Gly-23 is involved in allosteric activation by GTP. Residue Gly-52 participates in UMP binding. Positions 53 and 57 each coordinate ATP. Residues Asp-72 and Thr-133–Thr-140 each bind UMP. ATP is bound by residues Asn-161, Tyr-167, and Asp-170.

This sequence belongs to the UMP kinase family. Homohexamer.

The protein resides in the cytoplasm. The catalysed reaction is UMP + ATP = UDP + ADP. It functions in the pathway pyrimidine metabolism; CTP biosynthesis via de novo pathway; UDP from UMP (UMPK route): step 1/1. Its activity is regulated as follows. Allosterically activated by GTP. Inhibited by UTP. Its function is as follows. Catalyzes the reversible phosphorylation of UMP to UDP. This is Uridylate kinase from Lacticaseibacillus paracasei (strain ATCC 334 / BCRC 17002 / CCUG 31169 / CIP 107868 / KCTC 3260 / NRRL B-441) (Lactobacillus paracasei).